Reading from the N-terminus, the 151-residue chain is Large ribosomal subunit protein uL22 (151 aa).

The protein belongs to the universal ribosomal protein uL22 family. Part of the 50S ribosomal subunit.

This protein binds specifically to 23S rRNA. It makes multiple contacts with different domains of the 23S rRNA in the assembled 50S subunit and ribosome. Its function is as follows. The globular domain of the protein is located near the polypeptide exit tunnel on the outside of the subunit, while an extended beta-hairpin is found that lines the wall of the exit tunnel in the center of the 70S ribosome. This Thermofilum pendens (strain DSM 2475 / Hrk 5) protein is Large ribosomal subunit protein uL22.